We begin with the raw amino-acid sequence, 367 residues long: DNA replication and repair protein RecF (367 aa).

Residue 30–37 (GANGSGKT) participates in ATP binding.

Belongs to the RecF family.

The protein resides in the cytoplasm. Functionally, the RecF protein is involved in DNA metabolism; it is required for DNA replication and normal SOS inducibility. RecF binds preferentially to single-stranded, linear DNA. It also seems to bind ATP. In Pseudomonas putida (strain W619), this protein is DNA replication and repair protein RecF.